We begin with the raw amino-acid sequence, 722 residues long: Transcription factor kayak, isoforms D/sro (722 aa).

Over residues Gln-173–His-188 the composition is skewed to low complexity. Disordered stretches follow at residues Gln-173 to Tyr-193, Leu-283 to Ser-317, and Gly-350 to Val-407. Residues Leu-283–Gln-300 show a composition bias toward polar residues. 2 stretches are compositionally biased toward low complexity: residues Thr-308–Ser-317 and Gly-350–Thr-364. Residues Glu-385 to His-448 form the bZIP domain. Positions Lys-387–Arg-406 are basic motif. Positions Leu-413 to Leu-420 are leucine-zipper. Over residues Ala-477–Gly-498 the composition is skewed to low complexity. Disordered regions lie at residues Ala-477–Leu-519 and Asp-683–Leu-722. The span at Thr-506–Pro-516 shows a compositional bias: polar residues. A Phosphoserine modification is found at Ser-515.

It belongs to the bZIP family. Fos subfamily. Homodimer. Heterodimer with Jra. The kay-Jra heterodimer binds more stably to the AP-1 site than either of the two proteins alone.

Its subcellular location is the nucleus. Functionally, developmentally regulated transcription factor AP-1 binds and recognizes the enhancer DNA sequence: 5'-TGA[CG]TCA-3'. May play a role in the function or determination of a particular subset of cells in the developing embryo. It is able to carry out its function either independently of or in conjunction with Jra. This chain is Transcription factor kayak, isoforms D/sro, found in Drosophila melanogaster (Fruit fly).